The primary structure comprises 572 residues: Isocitrate lyase (572 aa).

104–106 (SGW) is a binding site for substrate. Asp175 is a Mg(2+) binding site. The active-site Proton acceptor is the Cys213. Residues 214–215 (GH), Arg250, 437–441 (NLSPS), and Thr472 contribute to the substrate site. The tract at residues 550–572 (QFKGSWTGPGSESSSHVLAKSRM) is disordered. A Microbody targeting signal motif is present at residues 570 to 572 (SRM).

The protein belongs to the isocitrate lyase/PEP mutase superfamily. Isocitrate lyase family. Mg(2+) serves as cofactor. As to expression, expressed in leaves.

It localises to the glyoxysome. It carries out the reaction D-threo-isocitrate = glyoxylate + succinate. Its pathway is carbohydrate metabolism; glyoxylate cycle; (S)-malate from isocitrate: step 1/2. In terms of biological role, involved in storage lipid mobilization during the growth of higher plant seedling. The sequence is that of Isocitrate lyase from Oryza sativa subsp. japonica (Rice).